Here is a 170-residue protein sequence, read N- to C-terminus: CASP-like protein 2D1 (170 aa).

Residues 1-4 are Cytoplasmic-facing; that stretch reads MLKL. The chain crosses the membrane as a helical span at residues 5 to 25; the sequence is LDFSLRLSVIPLSVATIWLTV. Topologically, residues 26 to 47 are extracellular; that stretch reads TNKQDNSIYGYLKYSDLTGLKY. A helical membrane pass occupies residues 48–68; sequence MVFISGICASYAFIAAVSTWI. The Cytoplasmic portion of the chain corresponds to 69–83; the sequence is RCIVTKTWLFFVSDQ. The chain crosses the membrane as a helical span at residues 84–104; it reads IVAYLMVTSGTAVLEILYLAY. Residues 105 to 127 are Extracellular-facing; it reads NGDREVSWSEACTSYGKFCYRMK. The helical transmembrane segment at 128-148 threads the bilayer; that stretch reads LAVILHALALSCFIILAVISA. At 149-170 the chain is on the cytoplasmic side; the sequence is YRAFSIFEPPLVPSKVVEEDRA.

Belongs to the Casparian strip membrane proteins (CASP) family. In terms of assembly, homodimer and heterodimers.

It localises to the cell membrane. The protein is CASP-like protein 2D1 of Populus trichocarpa (Western balsam poplar).